The following is a 230-amino-acid chain: Thioredoxin domain-containing protein PLP3B (230 aa).

The 85-residue stretch at 89–173 folds into the Thioredoxin domain; sequence VSEGDFLGEV…GIAMDRLVGF (85 aa). Positions 199 to 230 are disordered; it reads EKRKEEDEEDYEYQESIRRSVRSSANVDSDSD. Residues 220-230 show a composition bias toward polar residues; that stretch reads RSSANVDSDSD.

This sequence belongs to the phosducin family. Interacts with TUBB2, TUBB3, TUBB4 and TUBB5. As to expression, expressed in roots, cotyledons, leaves, stems and flowers.

It localises to the cytoplasm. The protein localises to the nucleus. In terms of biological role, tubulin-binding protein involved in microtubule formation. This chain is Thioredoxin domain-containing protein PLP3B (PLP3B), found in Arabidopsis thaliana (Mouse-ear cress).